Here is a 191-residue protein sequence, read N- to C-terminus: Peptidyl-tRNA hydrolase (191 aa).

Y14 is a tRNA binding site. The active-site Proton acceptor is H19. Positions 64, 66, and 112 each coordinate tRNA.

Belongs to the PTH family. Monomer.

It is found in the cytoplasm. It catalyses the reaction an N-acyl-L-alpha-aminoacyl-tRNA + H2O = an N-acyl-L-amino acid + a tRNA + H(+). Hydrolyzes ribosome-free peptidyl-tRNAs (with 1 or more amino acids incorporated), which drop off the ribosome during protein synthesis, or as a result of ribosome stalling. Functionally, catalyzes the release of premature peptidyl moieties from peptidyl-tRNA molecules trapped in stalled 50S ribosomal subunits, and thus maintains levels of free tRNAs and 50S ribosomes. This is Peptidyl-tRNA hydrolase from Clostridium beijerinckii (strain ATCC 51743 / NCIMB 8052) (Clostridium acetobutylicum).